A 148-amino-acid chain; its full sequence is NADH-ubiquinone oxidoreductase chain 3 (148 aa).

A run of 3 helical transmembrane segments spans residues 19-39 (FYMI…YIIT), 70-90 (FILI…ILPY), and 99-119 (IYGL…FIIE).

Belongs to the complex I subunit 3 family.

It is found in the mitochondrion membrane. It carries out the reaction a ubiquinone + NADH + 5 H(+)(in) = a ubiquinol + NAD(+) + 4 H(+)(out). Functionally, core subunit of the mitochondrial membrane respiratory chain NADH dehydrogenase (Complex I) that is believed to belong to the minimal assembly required for catalysis. Complex I functions in the transfer of electrons from NADH to the respiratory chain. The immediate electron acceptor for the enzyme is believed to be ubiquinone. In Wickerhamomyces canadensis (Yeast), this protein is NADH-ubiquinone oxidoreductase chain 3 (ND3).